The primary structure comprises 427 residues: Acyltransferase fer5 (427 aa).

A disordered region spans residues 1-24 (MTAATSVQPSPAPRQPGLRATFNP). Residue His-342 participates in substrate binding. Residue Glu-380 is the Proton acceptor of the active site.

Belongs to the lysine N-acyltransferase mbtK family.

The protein operates within siderophore biosynthesis. Its function is as follows. Acyltransferase; part of the gene cluster that mediates the biosynthesis of siderophore ferrichrome A which is contributing to organismal virulence. The first step of ferrichrome A biosynthesis is performed by the HMG-CoA synthase hcs1 which catalyzes the generation of HMG-CoA and CoA using acetoacetyl-CoA and acetyl-CoA as substrates. The enoyl-CoA isomerase/hydratase fer4 then catalyzes the conversion of hcs1-produced HMG-CoA to methylglutaconyl-CoA. The acyltransferase fer5 then fuses the fer4-generated methylglutaconyl-CoA with sid1-generated hydroxyornithine to yield methylglutaconyl hydroxyornithine. Methylglutaconyl hydroxyornithine is then available for use by the NRPS fer3 to generate ferrichrome A. This Mycosarcoma maydis (Corn smut fungus) protein is Acyltransferase fer5.